The chain runs to 332 residues: Glyceraldehyde-3-phosphate dehydrogenase 1 (332 aa).

Residues 11-12 (RI), Asp-32, and Arg-77 contribute to the NAD(+) site. D-glyceraldehyde 3-phosphate contacts are provided by residues 148–150 (SCT), Thr-179, 208–209 (TG), and Arg-231. Cys-149 serves as the catalytic Nucleophile. Residue Asn-313 coordinates NAD(+).

This sequence belongs to the glyceraldehyde-3-phosphate dehydrogenase family. In terms of assembly, homotetramer.

The protein localises to the cytoplasm. The enzyme catalyses D-glyceraldehyde 3-phosphate + phosphate + NAD(+) = (2R)-3-phospho-glyceroyl phosphate + NADH + H(+). The protein operates within carbohydrate degradation; glycolysis; pyruvate from D-glyceraldehyde 3-phosphate: step 1/5. This is Glyceraldehyde-3-phosphate dehydrogenase 1 (Gapdh1) from Drosophila melanogaster (Fruit fly).